The following is a 385-amino-acid chain: Odorant receptor 47a (385 aa).

At 1–33 the chain is on the cytoplasmic side; sequence MDSFLQVQKSTIALLGFDLFSENREMWKRPYRA. The chain crosses the membrane as a helical span at residues 34 to 54; sequence MNVFSIAAIFPFILAAVLHNW. The Extracellular segment spans residues 55-62; that stretch reads KNVLLLAD. A helical membrane pass occupies residues 63–83; it reads AMVALLITILGLFKFSMILYL. The Cytoplasmic segment spans residues 84–129; the sequence is RRDFKRLIDKFRLLMSNEAEQGEEYAEILNAANKQDQRMCTLFRTC. The helical transmembrane segment at 130-150 threads the bilayer; sequence FLLAWALNSVLPLVRMGLSYW. At 151–175 the chain is on the extracellular side; that stretch reads LAGHAEPELPFPCLFPWNIHIIRNY. A helical transmembrane segment spans residues 176–196; that stretch reads VLSFIWSAFASTGVVLPAVSL. Topologically, residues 197-255 are cytoplasmic; sequence DTIFCSFTSNLCAFFKIAQYKVVRFKGGSLKESQATLNKVFALYQTSLDMCNDLNQCYQ. The helical transmembrane segment at 256-276 threads the bilayer; the sequence is PIICAQFFISSLQLCMLGYLF. At 277-284 the chain is on the extracellular side; the sequence is SITFAQTE. A helical transmembrane segment spans residues 285–305; it reads GVYYASFIATIIIQAYIYCYC. The Cytoplasmic segment spans residues 306–357; it reads GENLKTESASFEWAIYDSPWHESLGAGGASTSICRSLLISMMRAHRGFRITG. Residues 358–378 traverse the membrane as a helical segment; it reads YFFEANMEAFSSIVRTAMSYI. The Extracellular segment spans residues 379-385; that stretch reads TMLRSFS.

The protein belongs to the insect chemoreceptor superfamily. Heteromeric odorant receptor channel (TC 1.A.69) family. Or1a subfamily. Interacts with Orco. Complexes exist early in the endomembrane system in olfactory sensory neurons (OSNs), coupling these complexes to the conserved ciliary trafficking pathway. As to expression, expressed with Orco in 40 olfactory receptor neurons in a broad area across the antenna, including both anterior and posterior faces. This expression pattern matches the distribution of the small sensilla basiconica. Expression in the antenna is observed late in antennal development at 93 hours APF.

It is found in the cell membrane. In terms of biological role, odorant receptor which mediates acceptance or avoidance behavior, depending on its substrates. The odorant receptor repertoire encodes a large collection of odor stimuli that vary widely in identity, intensity, and duration. Complexes with Orco to form odorant-sensing units, providing sensitive and prolonged odorant signaling and calcium permeability. They are necessary and sufficient to promote functional reconstitution of odor-evoked signaling in sensory neurons that normally respond only to carbon dioxide. Involved in the behavioral responses to esters. Involved in the behavioral responses to pentyl acetate. This is Odorant receptor 47a (Or47a) from Drosophila melanogaster (Fruit fly).